Reading from the N-terminus, the 1265-residue chain is Cohesin subunit SA-1 (1265 aa).

Positions 1–16 (MITSELSVLQDSTNES) are enriched in polar residues. 2 disordered regions span residues 1–21 (MITS…VMHT) and 37–91 (DLEV…EGDP). Residues 62 to 73 (TPGDRSRAEPGS) show a composition bias toward basic and acidic residues. An SCD domain is found at 303–388 (FVHRYRDAIA…NRFKDRIVSM (86 aa)). 2 disordered regions span residues 1063–1097 (GDED…KRVI) and 1111–1130 (DTIQ…TVLR). Residues 1069 to 1082 (SVNSGGSNSKGSSV) are compositionally biased toward low complexity. The segment covering 1083-1095 (RSKKGRPPLHKKR) has biased composition (basic residues). The span at 1111-1129 (DTIQTPGALTTPQLTSTVL) shows a compositional bias: polar residues.

This sequence belongs to the SCC3 family. Interacts directly with RAD21 in cohesin complex. Cohesin complexes are composed of a heterodimer between and SMC3, which are attached via their hinge domain, and RAD21 which link them at their heads, and one STAG protein (STAG1 OR STAG2). In cohesin complexes, STAG1 is mutually exclusive with STAG2. Post-translationally, phosphorylated by PLK1. The large dissociation of cohesin from chromosome arms during prophase is partly due to its phosphorylation.

The protein localises to the nucleus. Its subcellular location is the chromosome. The protein resides in the centromere. Its function is as follows. Component of cohesin complex, a complex required for the cohesion of sister chromatids after DNA replication. The cohesin complex apparently forms a large proteinaceous ring within which sister chromatids can be trapped. At anaphase, the complex is cleaved and dissociates from chromatin, allowing sister chromatids to segregate. The cohesin complex may also play a role in spindle pole assembly during mitosis. The sequence is that of Cohesin subunit SA-1 (stag1) from Xenopus laevis (African clawed frog).